A 329-amino-acid polypeptide reads, in one-letter code: MPSALLIGEITHARKEWEELSSILTLTEFPSGTREDFIRNCKEGQYDDVLVIYRSNTSTKFTGPFDAELLAVLPKSLKYICHNGAGYDNIDVKGCTDKGIAVSSTPVAVNHATADVGIFLMIGALRQAYVPLSALRAGQWQGQTTLGRDPQGKVLGILGMGGIGREMANRAKAFGMKIQYHNRSRLSPELEGDATYVSFDELLASSDVLSLNLALNASTRHIIGEKEFQKMKDGIVIVNTARGALIDEKALVAALDSGKVLSAGLDVYENEPVVEQGLVNNPKVMLLPHIGTMTYETQKDMELLVLNNLRSAVEKGKMITLVPEQKNVF.

Residues 162-163 (GI), 240-242 (TAR), and Asp266 each bind NAD(+). Arg242 is a catalytic residue. Glu271 is a catalytic residue. His289 (proton donor) is an active-site residue.

Belongs to the D-isomer specific 2-hydroxyacid dehydrogenase family.

The enzyme catalyses (2R)-hydroxy-4-methylpentanoate + NADP(+) = 4-methyl-2-oxopentanoate + NADPH + H(+). The catalysed reaction is a (2R)-2-hydroxycarboxylate + NADP(+) = a 2-oxocarboxylate + NADPH + H(+). Its function is as follows. 4-methyl-2-oxopentanoate (MOA) reductase that reduces MOA, a possible intermediate in leucine synthesis, to D-leucate in a NADPH- or NADH-dependent manner, but with a preference for NADPH. In addition to MOA, shows broad substrate specificity toward 2-keto acids. The chain is 4-methyl-2-oxopentanoate reductase A from Aspergillus oryzae (strain ATCC 42149 / RIB 40) (Yellow koji mold).